The primary structure comprises 303 residues: Phenoloxidase-activating factor 2 (303 aa).

Positions 1 to 24 (PDRRPPEDPITPPPPTKEEQRAGC) are disordered. Positions 36 to 292 (IIGDKDGEAK…LRDWIDDKVA (257 aa)) constitute a Peptidase S1 domain. 3 disulfides stabilise this stretch: C173–C247, C206–C227, and C237–C268.

The protein belongs to the peptidase S1 family. Heterodimer.

It localises to the secreted. Binds and activates processed prophenoloxidases PPO1 and PPO2 and thus is involved in the activation of the prophenoloxidase cascade probably following the recognition of pathogen-derived products. Binds the A.niger cell wall component alpha-1,3-glucan, a fungal pathogen-associated molecular pattern (PAMP) that activates the host immune response. The sequence is that of Phenoloxidase-activating factor 2 (LOC113510063) from Galleria mellonella (Greater wax moth).